The chain runs to 312 residues: tRNA dimethylallyltransferase (312 aa).

G11–T18 provides a ligand contact to ATP. T13–T18 is a binding site for substrate. Positions D36–C39 are interaction with substrate tRNA.

The protein belongs to the IPP transferase family. As to quaternary structure, monomer. Mg(2+) serves as cofactor.

The catalysed reaction is adenosine(37) in tRNA + dimethylallyl diphosphate = N(6)-dimethylallyladenosine(37) in tRNA + diphosphate. Its function is as follows. Catalyzes the transfer of a dimethylallyl group onto the adenine at position 37 in tRNAs that read codons beginning with uridine, leading to the formation of N6-(dimethylallyl)adenosine (i(6)A). This is tRNA dimethylallyltransferase from Caldicellulosiruptor saccharolyticus (strain ATCC 43494 / DSM 8903 / Tp8T 6331).